We begin with the raw amino-acid sequence, 224 residues long: ATP synthase subunit a (224 aa).

6 helical membrane passes run 17 to 37 (LSLNWLSTFLGLLMIPSIYWL), 72 to 92 (IFISLFSLILFNNFMGLFPYI), 99 to 119 (LTLTLSLALPLWLCFMLYGWI), 125 to 145 (MFAHLVPQGTPAVLMPFMVCI), 170 to 190 (LLLTLLGNTGPSMSYLLVTFL), and 195 to 215 (IALLVLESAVAMIQSYVFAVL).

The protein belongs to the ATPase A chain family. F-type ATPases have 2 components, CF(1) - the catalytic core - and CF(0) - the membrane proton channel. CF(1) has five subunits: alpha(3), beta(3), gamma(1), delta(1), epsilon(1). CF(0) has three main subunits: a, b and c.

Its subcellular location is the mitochondrion inner membrane. Mitochondrial membrane ATP synthase (F(1)F(0) ATP synthase or Complex V) produces ATP from ADP in the presence of a proton gradient across the membrane which is generated by electron transport complexes of the respiratory chain. F-type ATPases consist of two structural domains, F(1) - containing the extramembraneous catalytic core and F(0) - containing the membrane proton channel, linked together by a central stalk and a peripheral stalk. During catalysis, ATP synthesis in the catalytic domain of F(1) is coupled via a rotary mechanism of the central stalk subunits to proton translocation. Key component of the proton channel; it may play a direct role in the translocation of protons across the membrane. This chain is ATP synthase subunit a (mt:ATPase6), found in Drosophila mauritiana (Fruit fly).